Here is a 159-residue protein sequence, read N- to C-terminus: MSYSITSPSQFVFLSSVWADPIELLNFGTNSLGNQFQTQQARTTVQQQFSEVWKPFPQSTVRFPGDVYKVYRYNAVLDPLITALLGSFDTRNRIIEVENQQNPTTAETLDATRRVDDATVAIRSAINNLVNELVRGTGLYNQNTFESMSGLVWTSAPAS.

Ser2 is subject to N-acetylserine; by host.

The protein belongs to the virgaviridae capsid protein family.

It is found in the virion. Functionally, capsid protein self-assembles to form rod-shaped virions about 18 nm in diameter with a central canal enclosing the viral genomic RNA. This chain is Capsid protein (CP), found in Capsicum (peppers).